A 97-amino-acid polypeptide reads, in one-letter code: Co-chaperonin GroES (97 aa).

This sequence belongs to the GroES chaperonin family. In terms of assembly, heptamer of 7 subunits arranged in a ring. Interacts with the chaperonin GroEL.

It localises to the cytoplasm. Functionally, together with the chaperonin GroEL, plays an essential role in assisting protein folding. The GroEL-GroES system forms a nano-cage that allows encapsulation of the non-native substrate proteins and provides a physical environment optimized to promote and accelerate protein folding. GroES binds to the apical surface of the GroEL ring, thereby capping the opening of the GroEL channel. This chain is Co-chaperonin GroES, found in Stutzerimonas stutzeri (Pseudomonas stutzeri).